The following is a 90-amino-acid chain: Large ribosomal subunit protein uL16c (90 aa).

The protein belongs to the universal ribosomal protein uL16 family. Part of the 50S ribosomal subunit.

Its subcellular location is the plastid. The protein resides in the chloroplast. This is Large ribosomal subunit protein uL16c (rpl16) from Oenothera ammophila (Evening primerose).